The chain runs to 652 residues: uncharacterized protein (652 aa).

Composition is skewed to basic and acidic residues over residues 1–13 and 641–652; these read MSVT…TERK and ATERTDNLADAA. Disordered regions lie at residues 1–21 and 628–652; these read MSVT…PAKT and VPGW…ADAA.

It belongs to the ParB family.

This is an uncharacterized protein from Escherichia coli O157:H7.